Reading from the N-terminus, the 479-residue chain is Cyclin-dependent kinase F-1 (479 aa).

The Protein kinase domain maps to 24–419 (YEVLGRAGSG…AADLLNDPYF (396 aa)). ATP is bound by residues 30–38 (AGSGAYADV) and K53. The active-site Proton acceptor is the D146. A Phosphothreonine modification is found at T291. Residues 429–479 (EGLQVPESKDEDDDSTEEWANFRGGDSDSDFDEFGSMDVTKTDKGFSIRFS) form a disordered region. The segment covering 468–479 (TKTDKGFSIRFS) has biased composition (basic and acidic residues).

The protein belongs to the protein kinase superfamily. CMGC Ser/Thr protein kinase family. CDC2/CDKX subfamily.

The enzyme catalyses L-seryl-[protein] + ATP = O-phospho-L-seryl-[protein] + ADP + H(+). It catalyses the reaction L-threonyl-[protein] + ATP = O-phospho-L-threonyl-[protein] + ADP + H(+). The catalysed reaction is [DNA-directed RNA polymerase] + ATP = phospho-[DNA-directed RNA polymerase] + ADP + H(+). The protein is Cyclin-dependent kinase F-1 (CDKF-1) of Oryza sativa subsp. japonica (Rice).